The primary structure comprises 146 residues: MKKLLLVNGPNLNRLGVREVNVYGKGTLATLEADMKQEAETMGVELECFQSNHEGAIIDIIHEAEDIYEGIILNPGAFTHYSYAIRDAIASISIPVIEVHISNIHQRESFRHESVTAAVCAGQIVGFGFYGYKLALFALMEKLREA.

The Proton acceptor role is filled by Tyr-23. Residues Asn-74, His-80, and Asp-87 each contribute to the substrate site. Catalysis depends on His-100, which acts as the Proton donor. Residues 101 to 102 (IS) and Arg-111 each bind substrate.

Belongs to the type-II 3-dehydroquinase family. As to quaternary structure, homododecamer.

The enzyme catalyses 3-dehydroquinate = 3-dehydroshikimate + H2O. The protein operates within metabolic intermediate biosynthesis; chorismate biosynthesis; chorismate from D-erythrose 4-phosphate and phosphoenolpyruvate: step 3/7. Catalyzes a trans-dehydration via an enolate intermediate. The chain is 3-dehydroquinate dehydratase from Bacillus cereus (strain ATCC 14579 / DSM 31 / CCUG 7414 / JCM 2152 / NBRC 15305 / NCIMB 9373 / NCTC 2599 / NRRL B-3711).